The sequence spans 364 residues: Urease accessory protein UreD (364 aa).

Disordered stretches follow at residues 1–37 (MDQD…SSPA) and 201–250 (PPEV…AGER). 3 stretches are compositionally biased toward low complexity: residues 21 to 37 (AGSA…SSPA), 209 to 218 (APDRGAPAAE), and 236 to 248 (AASS…APAG).

This sequence belongs to the UreD family. As to quaternary structure, ureD, UreF and UreG form a complex that acts as a GTP-hydrolysis-dependent molecular chaperone, activating the urease apoprotein by helping to assemble the nickel containing metallocenter of UreC. The UreE protein probably delivers the nickel.

It is found in the cytoplasm. Required for maturation of urease via the functional incorporation of the urease nickel metallocenter. This is Urease accessory protein UreD from Kocuria rhizophila (strain ATCC 9341 / DSM 348 / NBRC 103217 / DC2201).